Here is a 247-residue protein sequence, read N- to C-terminus: 2,3-bisphosphoglycerate-dependent phosphoglycerate mutase (247 aa).

Substrate contacts are provided by residues 8-15, 21-22, arginine 60, 87-90, lysine 98, 114-115, and 183-184; these read RHGESQWN, TG, ERHY, RR, and GN. Catalysis depends on histidine 9, which acts as the Tele-phosphohistidine intermediate. Catalysis depends on glutamate 87, which acts as the Proton donor/acceptor.

This sequence belongs to the phosphoglycerate mutase family. BPG-dependent PGAM subfamily.

It carries out the reaction (2R)-2-phosphoglycerate = (2R)-3-phosphoglycerate. Its pathway is carbohydrate degradation; glycolysis; pyruvate from D-glyceraldehyde 3-phosphate: step 3/5. Catalyzes the interconversion of 2-phosphoglycerate and 3-phosphoglycerate. The chain is 2,3-bisphosphoglycerate-dependent phosphoglycerate mutase from Prosthecochloris aestuarii (strain DSM 271 / SK 413).